The following is a 398-amino-acid chain: tRNA pseudouridine synthase D (398 aa).

Catalysis depends on aspartate 76, which acts as the Nucleophile. One can recognise a TRUD domain in the interval 151-361 (GVPNRFGVQR…MEGERRPLRV (211 aa)).

It belongs to the pseudouridine synthase TruD family.

The enzyme catalyses uridine(13) in tRNA = pseudouridine(13) in tRNA. Its function is as follows. Responsible for synthesis of pseudouridine from uracil-13 in transfer RNAs. The chain is tRNA pseudouridine synthase D from Geobacter sp. (strain M21).